Here is a 452-residue protein sequence, read N- to C-terminus: UPF0210 protein PTH_0987 (452 aa).

The protein belongs to the UPF0210 family. In terms of assembly, homodimer.

This is UPF0210 protein PTH_0987 from Pelotomaculum thermopropionicum (strain DSM 13744 / JCM 10971 / SI).